Here is a 176-residue protein sequence, read N- to C-terminus: Large ribosomal subunit protein uL10 (176 aa).

The protein belongs to the universal ribosomal protein uL10 family. As to quaternary structure, part of the ribosomal stalk of the 50S ribosomal subunit. The N-terminus interacts with L11 and the large rRNA to form the base of the stalk. The C-terminus forms an elongated spine to which L12 dimers bind in a sequential fashion forming a multimeric L10(L12)X complex.

Its function is as follows. Forms part of the ribosomal stalk, playing a central role in the interaction of the ribosome with GTP-bound translation factors. This chain is Large ribosomal subunit protein uL10, found in Nocardia farcinica (strain IFM 10152).